The sequence spans 553 residues: Thioredoxin domain-containing protein 2 (553 aa).

2 disordered regions span residues 1-37 (MDVD…DANE) and 77-442 (TEES…EETM). Basic and acidic residues predominate over residues 99–143 (PKQDDSPKSSEETIQPKEGDIPKAPEETIQSKKEDLPKSSEKAIQ). Tandem repeats lie at residues 113–127 (QPKE…EETI), 128–142 (QSKK…EKAI), 143–157 (QPKE…AKPI), 158–172 (QPKL…VKPS), 173–187 (QPKE…EETI), 188–202 (QSKK…EEAI), 203–217 (QPKE…AKPI), 218–232 (QPKL…VKPS), 233–247 (QPKE…EETI), 248–262 (QPKE…AKPI), 263–277 (QPKL…VKPS), 278–292 (QPKE…EEAI), 293–307 (QPKE…EEAI), 308–322 (QPKE…EEAI), 323–337 (QPKE…EEAI), 338–352 (QPKE…EETI), 353–367 (QPKK…EEAI), 368–382 (QPKE…KQAI), 383–397 (QPKE…EEAI), 398–412 (PPKE…EETI), 413–427 (QPKE…EEAT), and 428–442 (PSKE…EETM). A 22 X 15 AA approximate tandem repeat of Q-P-K-X-G-D-I-P-K-S-[PS]-E-[KE]-X-I region spans residues 113-442 (QPKEGDIPKA…DILKPEEETM (330 aa)). The span at 173 to 209 (QPKEGDIPKAPEETIQSKKEDLPKSSEEAIQPKEGDI) shows a compositional bias: basic and acidic residues. Residues 233-254 (QPKESDIPKSPEETIQPKEGDI) show a composition bias toward basic and acidic residues. 2 stretches are compositionally biased toward basic and acidic residues: residues 278–376 (QPKE…DIPK) and 385–439 (KEGD…KPEE). Phosphoserine is present on serine 362. Residue serine 392 is modified to Phosphoserine. The region spanning 429–553 (SKEGDILKPE…KLEAVIAELK (125 aa)) is the Thioredoxin domain. Cysteine 480 and cysteine 483 are oxidised to a cystine.

As to expression, testis-specific. Only expressed during spermiogenesis, prominently in round and elongating spermatids.

It localises to the cytoplasm. Its function is as follows. Probably plays a regulatory role in sperm development. May participate in regulation of fibrous sheath (FS) assembly by supporting the formation of disulfide bonds during sperm tail morphogenesis. May also be required to rectify incorrect disulfide pairing and generate suitable pairs between the FS constituents. Can reduce disulfide bonds in vitro in the presence of NADP and thioredoxin reductase. The sequence is that of Thioredoxin domain-containing protein 2 (TXNDC2) from Homo sapiens (Human).